A 257-amino-acid chain; its full sequence is tRNA pseudouridine synthase A (257 aa).

D53 acts as the Nucleophile in catalysis. Y111 lines the substrate pocket.

This sequence belongs to the tRNA pseudouridine synthase TruA family. In terms of assembly, homodimer.

It carries out the reaction uridine(38/39/40) in tRNA = pseudouridine(38/39/40) in tRNA. Functionally, formation of pseudouridine at positions 38, 39 and 40 in the anticodon stem and loop of transfer RNAs. This chain is tRNA pseudouridine synthase A, found in Xylella fastidiosa (strain M12).